A 291-amino-acid chain; its full sequence is Acetyl-coenzyme A carboxylase carboxyl transferase subunit beta (291 aa).

One can recognise a CoA carboxyltransferase N-terminal domain in the interval 34–291 (MWTKCSNCNS…LILHGVNKYE (258 aa)). 4 residues coordinate Zn(2+): Cys-38, Cys-41, Cys-57, and Cys-60. A C4-type zinc finger spans residues 38–60 (CSNCNSMIYYEDLENNKYVCTKC).

This sequence belongs to the AccD/PCCB family. In terms of assembly, acetyl-CoA carboxylase is a heterohexamer composed of biotin carboxyl carrier protein (AccB), biotin carboxylase (AccC) and two subunits each of ACCase subunit alpha (AccA) and ACCase subunit beta (AccD). Zn(2+) is required as a cofactor.

It localises to the cytoplasm. The catalysed reaction is N(6)-carboxybiotinyl-L-lysyl-[protein] + acetyl-CoA = N(6)-biotinyl-L-lysyl-[protein] + malonyl-CoA. It participates in lipid metabolism; malonyl-CoA biosynthesis; malonyl-CoA from acetyl-CoA: step 1/1. Functionally, component of the acetyl coenzyme A carboxylase (ACC) complex. Biotin carboxylase (BC) catalyzes the carboxylation of biotin on its carrier protein (BCCP) and then the CO(2) group is transferred by the transcarboxylase to acetyl-CoA to form malonyl-CoA. In Clostridium botulinum (strain Alaska E43 / Type E3), this protein is Acetyl-coenzyme A carboxylase carboxyl transferase subunit beta.